Reading from the N-terminus, the 231-residue chain is Large ribosomal subunit protein uL1 (231 aa).

The protein belongs to the universal ribosomal protein uL1 family. In terms of assembly, part of the 50S ribosomal subunit.

Binds directly to 23S rRNA. The L1 stalk is quite mobile in the ribosome, and is involved in E site tRNA release. Its function is as follows. Protein L1 is also a translational repressor protein, it controls the translation of the L11 operon by binding to its mRNA. The polypeptide is Large ribosomal subunit protein uL1 (Francisella tularensis subsp. tularensis (strain FSC 198)).